Here is a 120-residue protein sequence, read N- to C-terminus: Immunoglobulin kappa variable 2D-28 (120 aa).

The first 19 residues, 1–19 (MRLPAQLLGLLMLWVSGSS), serve as a signal peptide directing secretion. The 101-residue stretch at 20–120 (GDIVMTQSPL…YYCMQALQTP (101 aa)) folds into the Ig-like domain. The interval 21–43 (DIVMTQSPLSLPVTPGEPASISC) is framework-1. C43 and C113 are joined by a disulfide. A complementarity-determining-1 region spans residues 44–59 (RSSQSLLHSNGYNYLD). Residues 60–74 (WYLQKPGQSPQLLIY) form a framework-2 region. The tract at residues 75-81 (LGSNRAS) is complementarity-determining-2. The segment at 82 to 113 (GVPDRFSGSGSGTDFTLKISRVEAEDVGVYYC) is framework-3. The tract at residues 114-120 (MQALQTP) is complementarity-determining-3.

In terms of assembly, immunoglobulins are composed of two identical heavy chains and two identical light chains; disulfide-linked.

The protein localises to the secreted. It is found in the cell membrane. Its function is as follows. V region of the variable domain of immunoglobulin light chains that participates in the antigen recognition. Immunoglobulins, also known as antibodies, are membrane-bound or secreted glycoproteins produced by B lymphocytes. In the recognition phase of humoral immunity, the membrane-bound immunoglobulins serve as receptors which, upon binding of a specific antigen, trigger the clonal expansion and differentiation of B lymphocytes into immunoglobulins-secreting plasma cells. Secreted immunoglobulins mediate the effector phase of humoral immunity, which results in the elimination of bound antigens. The antigen binding site is formed by the variable domain of one heavy chain, together with that of its associated light chain. Thus, each immunoglobulin has two antigen binding sites with remarkable affinity for a particular antigen. The variable domains are assembled by a process called V-(D)-J rearrangement and can then be subjected to somatic hypermutations which, after exposure to antigen and selection, allow affinity maturation for a particular antigen. This is Immunoglobulin kappa variable 2D-28 from Homo sapiens (Human).